A 721-amino-acid polypeptide reads, in one-letter code: Far upstream element-binding protein 2 (721 aa).

The disordered stretch occupies residues 1–148 (MSDYSTGGPP…HPPPRTSMTE (148 aa)). Ser-2 is modified (N-acetylserine). Positions 8–17 (GPPPGPPPPA) are enriched in pro residues. Composition is skewed to gly residues over residues 18-28 (GGGGGAAGAGG) and 36-69 (GAGDRGGGGPGGGGPGGGGASGGPSQPPGGGGPG). At Arg-40 the chain carries Omega-N-methylarginine. An N6-acetyllysine modification is found at Lys-88. Phosphothreonine is present on Thr-101. A compositionally biased stretch (basic and acidic residues) spans 111–123 (RQLEDGDQPDSKK). Lys-122 is covalently cross-linked (Glycyl lysine isopeptide (Lys-Gly) (interchain with G-Cter in SUMO1); alternate). A Glycyl lysine isopeptide (Lys-Gly) (interchain with G-Cter in SUMO2); alternate cross-link involves residue Lys-122. 6 positions are modified to phosphoserine: Ser-126, Ser-130, Ser-182, Ser-185, Ser-194, and Ser-275. KH domains are found at residues 145–209 (SMTE…KMML), 234–300 (GTVQ…CEMV), and 323–387 (GGGI…ARII). Positions 394–422 (LRSGPPGPPGAPGMPPGGRGRGRGQGNWG) are disordered. Residues 398–408 (PPGPPGAPGMP) are compositionally biased toward pro residues. A compositionally biased stretch (gly residues) spans 409–422 (PGGRGRGRGQGNWG). 4 positions are modified to omega-N-methylarginine: Arg-412, Arg-414, Arg-416, and Arg-443. A KH 4 domain is found at 425–492 (GGEMTFSIPT…QQIDHAKQLI (68 aa)). Ser-481 carries the post-translational modification Phosphoserine. The tract at residues 498-570 (GPLCPVGPGP…HDPNKAAAAA (73 aa)) is disordered. Composition is skewed to pro residues over residues 502–521 (PVGPGPGGPGPAGPMGPFHP) and 529–543 (PGAPPHAGGPPPHQY). Copy 1 of the repeat occupies 572 to 583 (DPNAAWAAYYSH). Positions 572-685 (DPNAAWAAYY…SAAWAEYYRQ (114 aa)) are 4 X 12 AA imperfect repeats. The span at 588-614 (PPGPVPGPAPAPAAPPAQGEPPQPPPT) shows a compositional bias: pro residues. Disordered stretches follow at residues 588 to 650 (PPGP…KAWE), 659 to 678 (VATGGGPGAPPGSQPDYSAA), and 688 to 721 (AYYGQTPGPGGPQPPSTQQGQQQATEANGYELHL). 3 repeat units span residues 618–629 (DYTKAWEEYYKK), 644–655 (DYTKAWEEYYKK), and 674–685 (DYSAAWAEYYRQ).

Belongs to the KHSRP family. Part of a ternary complex containing FUBP2, PTBP1, PTBP2 and HNRPH1. Interacts with PARN. Interacts with PQBP1.

Its subcellular location is the nucleus. The protein resides in the cytoplasm. In terms of biological role, part of a ternary complex that binds to the downstream control sequence (DCS) of the pre-mRNA. Mediates exon inclusion in transcripts that are subject to tissue-specific alternative splicing. May interact with single-stranded DNA from the far-upstream element (FUSE). May activate gene expression. Also involved in degradation of inherently unstable mRNAs that contain AU-rich elements (AREs) in their 3'-UTR, possibly by recruiting degradation machinery to ARE-containing mRNAs. Binds to the dendritic targeting element and may play a role in mRNA trafficking. This chain is Far upstream element-binding protein 2 (Khsrp), found in Rattus norvegicus (Rat).